Here is a 537-residue protein sequence, read N- to C-terminus: Di/tripeptide-binding protein 1 (537 aa).

Positions 1–29 are cleaved as a signal peptide; sequence MRRNAVIRSAIMPSLLGAALVAAVPQAFA.

The protein belongs to the bacterial solute-binding protein 5 family. As to quaternary structure, the complex is composed of two ATP-binding proteins (DppD and DppF), two transmembrane proteins (DppB and DppC) and a solute-binding protein (DppA1). Five orthologous SBPs (DppA1-A5) are present in P.aeruginosa, which increases the substrate specificity of the DppBCDF transporter.

Its function is as follows. Part of the ABC transporter DppABCDF involved in the uptake of various di/tripeptides. Prefers dipeptides with acidic residues at the C-terminal end. Involved in the uptake of phaseolotoxin, a toxic tripeptide inhibiting the enzyme ornithine carbamoyltransferase. In Pseudomonas aeruginosa (strain UCBPP-PA14), this protein is Di/tripeptide-binding protein 1.